The chain runs to 302 residues: tRNA-cytidine(32) 2-sulfurtransferase (302 aa).

Residues 57 to 62 (SGGKDS) carry the PP-loop motif motif. Cys-132, Cys-135, and Cys-223 together coordinate [4Fe-4S] cluster.

The protein belongs to the TtcA family. As to quaternary structure, homodimer. Mg(2+) is required as a cofactor. Requires [4Fe-4S] cluster as cofactor.

Its subcellular location is the cytoplasm. It carries out the reaction cytidine(32) in tRNA + S-sulfanyl-L-cysteinyl-[cysteine desulfurase] + AH2 + ATP = 2-thiocytidine(32) in tRNA + L-cysteinyl-[cysteine desulfurase] + A + AMP + diphosphate + H(+). It functions in the pathway tRNA modification. Catalyzes the ATP-dependent 2-thiolation of cytidine in position 32 of tRNA, to form 2-thiocytidine (s(2)C32). The sulfur atoms are provided by the cysteine/cysteine desulfurase (IscS) system. The polypeptide is tRNA-cytidine(32) 2-sulfurtransferase (Marinobacter nauticus (strain ATCC 700491 / DSM 11845 / VT8) (Marinobacter aquaeolei)).